The following is a 337-amino-acid chain: Large ribosomal subunit protein uL3 (337 aa).

The segment at 1 to 20 (MASIHRPKRGSLAFSPRKRA) is disordered.

This sequence belongs to the universal ribosomal protein uL3 family. In terms of assembly, part of the 50S ribosomal subunit. Forms a cluster with proteins L14 and L24e.

In terms of biological role, one of the primary rRNA binding proteins, it binds directly near the 3'-end of the 23S rRNA, where it nucleates assembly of the 50S subunit. This is Large ribosomal subunit protein uL3 from Methanosarcina acetivorans (strain ATCC 35395 / DSM 2834 / JCM 12185 / C2A).